A 198-amino-acid polypeptide reads, in one-letter code: ADP-ribosylation factor-like protein 3 (198 aa).

Position 1 is an N-acetylmethionine (Met1). A GTP-binding site is contributed by 24–31 (GLDNAGKT). Lys50 is covalently cross-linked (Glycyl lysine isopeptide (Lys-Gly) (interchain with G-Cter in ubiquitin)). GTP contacts are provided by residues 74–78 (DVGGQ) and 133–136 (NKQD).

Belongs to the small GTPase superfamily. Arf family. Interacts with SYS1 and SLO1.

The protein resides in the golgi apparatus. Its function is as follows. Involved in the targeting of ARL1 to the Golgi. Can bind and hydrolyze GTP. This chain is ADP-ribosylation factor-like protein 3 (ARL3), found in Saccharomyces cerevisiae (strain ATCC 204508 / S288c) (Baker's yeast).